Here is a 205-residue protein sequence, read N- to C-terminus: Outer-membrane lipoprotein LolB (205 aa).

The first 17 residues, 1 to 17 (MFLRHCITFTLIALLAG), serve as a signal peptide directing secretion. The N-palmitoyl cysteine moiety is linked to residue Cys-18. Residue Cys-18 is the site of S-diacylglycerol cysteine attachment.

This sequence belongs to the LolB family. Monomer.

It localises to the cell outer membrane. Plays a critical role in the incorporation of lipoproteins in the outer membrane after they are released by the LolA protein. This Pseudomonas putida (strain ATCC 47054 / DSM 6125 / CFBP 8728 / NCIMB 11950 / KT2440) protein is Outer-membrane lipoprotein LolB.